The following is a 666-amino-acid chain: Chaperone protein dnaK1 (666 aa).

The residue at position 198 (Thr-198) is a Phosphothreonine; by autocatalysis.

Belongs to the heat shock protein 70 family.

In terms of biological role, acts as a chaperone. The polypeptide is Chaperone protein dnaK1 (dnaK1) (Prochlorococcus marinus (strain SARG / CCMP1375 / SS120)).